A 171-amino-acid polypeptide reads, in one-letter code: Small ribosomal subunit protein mS25 (171 aa).

The protein belongs to the mitochondrion-specific ribosomal protein mS25 family. Component of the mitochondrial ribosome small subunit (28S) which comprises a 12S rRNA and about 30 distinct proteins.

It is found in the mitochondrion. The sequence is that of Small ribosomal subunit protein mS25 (Mrps25) from Mus musculus (Mouse).